The chain runs to 228 residues: Cytidylate kinase (228 aa).

10 to 18 (GPSGSGKGT) provides a ligand contact to ATP.

Belongs to the cytidylate kinase family. Type 1 subfamily.

The protein resides in the cytoplasm. It carries out the reaction CMP + ATP = CDP + ADP. The enzyme catalyses dCMP + ATP = dCDP + ADP. In Acinetobacter baumannii (strain SDF), this protein is Cytidylate kinase.